The following is a 267-amino-acid chain: MASYAVLGATGNTGQALINILLQSPEKKIHAYCRSKQKLLRLTPQLAGNKNVKVFEGSLNDTAVIADCIRGSRAVFLAVAVPDNMPGMTIAQDTARVTVNALQRIRAENEKAILPKVIVLSSAKLDDKLCQNMPNAMKVLVKLATSNQCADLKESQRILTAERHWISSTFMMPGGLVQDAQKGHALSLETEKTPLSYLDLAAGMVEVADAEDEYHMKNVSVIPTGTGVKFPYESLLEVVKGLLAHYFPWTYRYTGAMPMPVLPQKTA.

Belongs to the avfA family.

It participates in mycotoxin biosynthesis. Its function is as follows. Oxidoreductase; part of the fragmented gene cluster that mediates the biosynthesis of dothistromin (DOTH), a polyketide toxin very similar in structure to the aflatoxin precursor, versicolorin B. The first step of the pathway is the conversion of acetate to norsolorinic acid (NOR) and requires the fatty acid synthase subunits hexA and hexB, as well as the polyketide synthase pksA. PksA combines a hexanoyl starter unit and 7 malonyl-CoA extender units to synthesize the precursor NOR. The hexanoyl starter unit is provided to the acyl-carrier protein (ACP) domain by the fungal fatty acid synthase hexA/hexB. The second step is the conversion of NOR to averantin (AVN) and requires the norsolorinic acid ketoreductase nor1, which catalyzes the dehydration of norsolorinic acid to form (1'S)-averantin. The cytochrome P450 monooxygenase avnA then catalyzes the hydroxylation of AVN to 5'hydroxyaverantin (HAVN). The next step is performed by adhA that transforms HAVN to averufin (AVF). Averufin might then be converted to hydroxyversicolorone by cypX and avfA. Hydroxyversicolorone is further converted versiconal hemiacetal acetate (VHA) by moxY. VHA is then the substrate for the versiconal hemiacetal acetate esterase est1 to yield versiconal (VAL). Versicolorin B synthase vbsA then converts VAL to versicolorin B (VERB) by closing the bisfuran ring. Then, the activity of the versicolorin B desaturase verB leads to versicolorin A (VERA). DotB, a predicted chloroperoxidase, may perform epoxidation of the A-ring of VERA. Alternatively, a cytochrome P450, such as cypX or avnA could catalyze this step. It is also possible that another, uncharacterized, cytochrome P450 enzyme is responsible for this step. Opening of the epoxide could potentially be achieved by the epoxide hydrolase epoA. However, epoA seems not to be required for DOTH biosynthesis, but other epoxide hydrolases may have the ability to complement this hydrolysis. Alternatively, opening of the epoxide ring could be achieved non-enzymatically. The next step is the deoxygenation of ring A to yield the 5,8-dihydroxyanthraquinone which is most likely catalyzed by the NADPH dehydrogenase encoded by ver1. The last stages of DOTH biosynthesis are proposed to involve hydroxylation of the bisfuran. OrdB and norB might have oxidative roles here. An alternative possibility is that cytochrome P450 monoogenases such as avnA and cypX might perform these steps in addition to previously proposed steps. The sequence is that of Oxidoreductase ordB from Dothistroma septosporum (strain NZE10 / CBS 128990) (Red band needle blight fungus).